The sequence spans 155 residues: RING finger protein 122 (155 aa).

A helical transmembrane segment spans residues 40 to 60 (VIFGTGIFVFMLSLIFCCYFI). An RING-type; atypical zinc finger spans residues 93 to 134 (CAVCLEDFKGKDELGVLPCQHAFHRKCLVKWLEVRCVCPMCN).

It localises to the golgi apparatus. It is found in the endoplasmic reticulum. The protein resides in the membrane. May induce necrosis and apoptosis. May play a role in cell viability. This Mus musculus (Mouse) protein is RING finger protein 122 (Rnf122).